The primary structure comprises 118 residues: Ribonuclease P protein component (118 aa).

The protein belongs to the RnpA family. In terms of assembly, consists of a catalytic RNA component (M1 or rnpB) and a protein subunit.

The enzyme catalyses Endonucleolytic cleavage of RNA, removing 5'-extranucleotides from tRNA precursor.. Functionally, RNaseP catalyzes the removal of the 5'-leader sequence from pre-tRNA to produce the mature 5'-terminus. It can also cleave other RNA substrates such as 4.5S RNA. The protein component plays an auxiliary but essential role in vivo by binding to the 5'-leader sequence and broadening the substrate specificity of the ribozyme. The sequence is that of Ribonuclease P protein component from Levilactobacillus brevis (strain ATCC 367 / BCRC 12310 / CIP 105137 / JCM 1170 / LMG 11437 / NCIMB 947 / NCTC 947) (Lactobacillus brevis).